We begin with the raw amino-acid sequence, 494 residues long: UPF0371 protein SPT_0390 (494 aa).

It belongs to the UPF0371 family.

The polypeptide is UPF0371 protein SPT_0390 (Streptococcus pneumoniae (strain Taiwan19F-14)).